A 179-amino-acid polypeptide reads, in one-letter code: Replication restart protein DnaT (179 aa).

A disordered region spans residues G156–G179.

Belongs to the DnaT family. As to quaternary structure, homooligomerizes. Interacts with PriB. Component of the replication restart primosome. Primosome assembly occurs via a 'hand-off' mechanism. PriA binds to replication forks, subsequently PriB then DnaT bind; DnaT then displaces ssDNA to generate the helicase loading substrate.

Functionally, involved in the restart of stalled replication forks, which reloads the replicative helicase on sites other than the origin of replication. Can function in multiple replication restart pathways. Displaces ssDNA from a PriB-ssDNA complex. Probably forms a spiral filament on ssDNA. In Shigella boydii serotype 18 (strain CDC 3083-94 / BS512), this protein is Replication restart protein DnaT.